Reading from the N-terminus, the 135-residue chain is Small ribosomal subunit protein bS18 (135 aa).

A disordered region spans residues 1-65 (MARPDMGGPK…GDEGGGRRGF (65 aa)). The segment covering 9 to 41 (PKMGGGFGGPRSGGFGGGGGGGGFGGGGFGGGR) has biased composition (gly residues). Basic and acidic residues predominate over residues 42 to 61 (GGDRGDRGDRDDRGGDEGGG).

Belongs to the bacterial ribosomal protein bS18 family. As to quaternary structure, part of the 30S ribosomal subunit. Forms a tight heterodimer with protein bS6.

Binds as a heterodimer with protein bS6 to the central domain of the 16S rRNA, where it helps stabilize the platform of the 30S subunit. In Anaeromyxobacter dehalogenans (strain 2CP-C), this protein is Small ribosomal subunit protein bS18.